A 98-amino-acid chain; its full sequence is Cell division protein FtsB (98 aa).

At 1–3 (MKR) the chain is on the cytoplasmic side. The chain crosses the membrane as a helical span at residues 4–21 (LLIVLIALLAMLEYRLWF). Residues 22–98 (GDKSLAESFH…GGERDKPSND (77 aa)) are Periplasmic-facing. Positions 31 to 74 (HLQEQIKLQQQSNAQLVARNQILREEISDLRSGTEALEERARNE) form a coiled coil.

This sequence belongs to the FtsB family. In terms of assembly, part of a complex composed of FtsB, FtsL and FtsQ.

The protein resides in the cell inner membrane. Functionally, essential cell division protein. May link together the upstream cell division proteins, which are predominantly cytoplasmic, with the downstream cell division proteins, which are predominantly periplasmic. In Shewanella halifaxensis (strain HAW-EB4), this protein is Cell division protein FtsB.